Here is a 154-residue protein sequence, read N- to C-terminus: Large ribosomal subunit protein uL15 (154 aa).

The segment at 1 to 57 (MRFQDLHPQAGSRRRKRRIGRGIAAGQGASGGFGMRGQKSRSGRPTRPGFEGGQNPL) is disordered. Residues 23–35 (IAAGQGASGGFGM) are compositionally biased toward gly residues.

It belongs to the universal ribosomal protein uL15 family. Part of the 50S ribosomal subunit.

Functionally, binds to the 23S rRNA. The chain is Large ribosomal subunit protein uL15 from Thermosynechococcus vestitus (strain NIES-2133 / IAM M-273 / BP-1).